The following is a 283-amino-acid chain: Putative cytochrome b-c1 complex subunit Rieske-like protein 1 (283 aa).

A helical transmembrane segment spans residues Thr-116–Met-149. Residues Glu-196–Ile-281 form the Rieske domain. [2Fe-2S] cluster contacts are provided by Cys-226, His-228, Cys-245, and His-248. Cys-231 and Cys-247 form a disulfide bridge.

The protein belongs to the Rieske iron-sulfur protein family. [2Fe-2S] cluster is required as a cofactor.

It localises to the membrane. The polypeptide is Putative cytochrome b-c1 complex subunit Rieske-like protein 1 (UQCRFS1P1) (Homo sapiens (Human)).